The sequence spans 615 residues: Translation initiation factor IF-2 (615 aa).

The 168-residue stretch at 118–285 (KRPPIVTVMG…AILTLAEINE (168 aa)) folds into the tr-type G domain. The tract at residues 127–134 (GHVDHGKT) is G1. 127 to 134 (GHVDHGKT) serves as a coordination point for GTP. Residues 152 to 156 (GITQH) are G2. The tract at residues 173 to 176 (DTPG) is G3. GTP-binding positions include 173–177 (DTPGH) and 227–230 (NKMD). Residues 227–230 (NKMD) are G4. The G5 stretch occupies residues 263–265 (SAI).

Belongs to the TRAFAC class translation factor GTPase superfamily. Classic translation factor GTPase family. IF-2 subfamily.

The protein localises to the cytoplasm. One of the essential components for the initiation of protein synthesis. Protects formylmethionyl-tRNA from spontaneous hydrolysis and promotes its binding to the 30S ribosomal subunits. Also involved in the hydrolysis of GTP during the formation of the 70S ribosomal complex. This chain is Translation initiation factor IF-2, found in Mycoplasmoides gallisepticum (strain R(low / passage 15 / clone 2)) (Mycoplasma gallisepticum).